The sequence spans 360 residues: Pyrimidine monooxygenase RutA (360 aa).

Residues 49-50 (IK), N115, E124, 140-141 (RY), and S190 contribute to the FMN site.

This sequence belongs to the NtaA/SnaA/DszA monooxygenase family. RutA subfamily.

It carries out the reaction uracil + FMNH2 + NADH + O2 = (Z)-3-ureidoacrylate + FMN + NAD(+) + H2O + H(+). The enzyme catalyses thymine + FMNH2 + NADH + O2 = (Z)-2-methylureidoacrylate + FMN + NAD(+) + H2O + H(+). In terms of biological role, catalyzes the pyrimidine ring opening between N-3 and C-4 by an unusual flavin hydroperoxide-catalyzed mechanism, adding oxygen atoms in the process to yield ureidoacrylate peracid, that immediately reacts with FMN forming ureidoacrylate and FMN-N(5)-oxide. The FMN-N(5)-oxide reacts spontaneously with NADH to produce FMN. Requires the flavin reductase RutF to regenerate FMN in vivo. The sequence is that of Pyrimidine monooxygenase RutA from Pseudomonas syringae pv. syringae (strain B728a).